The following is a 284-amino-acid chain: MTAQIIDGKAIAQSIRTQLREKVTARKEAGQRVPGLAVILVGADPASQVYVGSKRKACEEVGFISRSYDLDTSYTEEALLALIDELNDDPTIDGILVQLPLPAHIEDSKVIERIRPDKDVDGFHPYNVGRLAQRIPVLRSCTPMGIMTLIKSTGVDTYGLDAVVVGASNIVGRPMTLELLLAGCTTTTCHRFTKNLEQKIRQADLVVVAVGKPGFIPGEWIKPGAIVIDVGINRLENGTLVGDVQYDVAAQNASFITPVPGGVGPMTIASLLENTLYAAEQYHD.

NADP(+) is bound by residues 166–168 (GAS) and isoleucine 232.

This sequence belongs to the tetrahydrofolate dehydrogenase/cyclohydrolase family. As to quaternary structure, homodimer.

It carries out the reaction (6R)-5,10-methylene-5,6,7,8-tetrahydrofolate + NADP(+) = (6R)-5,10-methenyltetrahydrofolate + NADPH. The enzyme catalyses (6R)-5,10-methenyltetrahydrofolate + H2O = (6R)-10-formyltetrahydrofolate + H(+). The protein operates within one-carbon metabolism; tetrahydrofolate interconversion. Functionally, catalyzes the oxidation of 5,10-methylenetetrahydrofolate to 5,10-methenyltetrahydrofolate and then the hydrolysis of 5,10-methenyltetrahydrofolate to 10-formyltetrahydrofolate. The polypeptide is Bifunctional protein FolD (Shewanella sp. (strain ANA-3)).